The chain runs to 561 residues: Probable xyloglucan galactosyltransferase GT20 (561 aa).

Over 1–31 (MVSKRKSRTSKTIEDSCIHLCSVFFRFLYYT) the chain is Cytoplasmic. Residues 32–52 (LPALFLFFFLLYLCLSFTTGI) form a helical; Signal-anchor for type II membrane protein membrane-spanning segment. The Lumenal segment spans residues 53 to 561 (SYNNFHMCIF…LLKKINRSVV (509 aa)). N-linked (GlcNAc...) asparagine glycosylation is found at asparagine 87, asparagine 253, asparagine 277, asparagine 418, asparagine 421, and asparagine 557.

It belongs to the glycosyltransferase 47 family. As to expression, expressed in hydathodes.

The protein resides in the golgi apparatus membrane. Functions in xyloglucan synthesis by adding side chains to the xylosylated glucan backbone. Involved in the galactosylation of hemicellulose xyloglucan. The sequence is that of Probable xyloglucan galactosyltransferase GT20 from Arabidopsis thaliana (Mouse-ear cress).